Consider the following 868-residue polypeptide: Muscle, skeletal receptor tyrosine protein kinase (868 aa).

The first 21 residues, 1–21 (MRELVNIPLLQMLTLVAFSGT), serve as a signal peptide directing secretion. The Extracellular portion of the chain corresponds to 22-494 (EKLPKAPVIT…FAVSPAYSMT (473 aa)). Ig-like domains follow at residues 28-116 (PVIT…GALQ), 121-205 (PKIT…KLVK), and 212-302 (ARIL…ATVS). 3 disulfides stabilise this stretch: Cys-49–Cys-99, Cys-98–Cys-112, and Cys-142–Cys-190. The N-linked (GlcNAc...) asparagine glycan is linked to Asn-222. Disulfide bonds link Cys-233-Cys-282, Cys-317-Cys-382, Cys-325-Cys-375, Cys-366-Cys-406, Cys-394-Cys-447, and Cys-398-Cys-434. Positions 312 to 450 (ESKGYCAQYR…HQDPTACTRL (139 aa)) constitute an FZ domain. An N-linked (GlcNAc...) asparagine glycan is attached at Asn-338. Asn-459 is a glycosylation site (N-linked (GlcNAc...) asparagine). A helical membrane pass occupies residues 495-515 (VIISIMSCFAVFALLTITTLY). Topologically, residues 516–868 (CCRRRREWKN…CERAEGTVGV (353 aa)) are cytoplasmic. Phosphotyrosine; by autocatalysis is present on Tyr-553. The Protein kinase domain occupies 574-855 (IEYVRDIGEG…PSFCSIHRIL (282 aa)). Residues 580–588 (IGEGAFGRV) and Lys-608 each bind ATP. Phosphoserine; by CK2 occurs at positions 680 and 697. The active-site Proton acceptor is the Asp-724. Tyr-754 carries the post-translational modification Phosphotyrosine; by autocatalysis.

The protein belongs to the protein kinase superfamily. Tyr protein kinase family. Monomer. Homodimer. Interacts with LRP4; the heterodimer forms an AGRIN receptor complex that binds AGRIN resulting in activation of MUSK. Forms a heterotetramer composed of 2 DOK7 and 2 MUSK molecules which facilitates MUSK trans-autophosphorylation on tyrosine residue and activation. Interacts (via cytoplasmic part) with DOK7 (via IRS-type PTB domain); requires MUSK phosphorylation. Interacts with DVL1 (via DEP domain); the interaction is direct and mediates the formation of a DVL1, MUSK and PAK1 ternary complex involved in AChR clustering. Interacts with PDZRN3; this interaction is enhanced by agrin. Interacts with FNTA; the interaction is direct and mediates AGRIN-induced phosphorylation and activation of FNTA. Interacts with CSNK2B; mediates regulation by CK2. Interacts (via the cytoplasmic domain) with DNAJA3. Interacts with NSF; may regulate MUSK endocytosis and activity. Interacts with CAV3; may regulate MUSK signaling. Interacts with RNF31. Interacts with DOK7. Requires Mg(2+) as cofactor. Post-translationally, ubiquitinated by PDZRN3. Ubiquitination promotes endocytosis and lysosomal degradation. Phosphorylated. Phosphorylation is induced by AGRIN in a LRP4-dependent manner. Autophosphorylated. Autophosphorylation at Tyr-553 is required for interaction with DOK7 which in turn stimulates the phosphorylation and the activation of MUSK. In terms of processing, neddylated. In terms of tissue distribution, muscle specific.

Its subcellular location is the postsynaptic cell membrane. The enzyme catalyses L-tyrosyl-[protein] + ATP = O-phospho-L-tyrosyl-[protein] + ADP + H(+). With respect to regulation, positively regulated by CK2. In terms of biological role, receptor tyrosine kinase which plays a central role in the formation and the maintenance of the neuromuscular junction (NMJ), the synapse between the motor neuron and the skeletal muscle. Recruitment of AGRIN by LRP4 to the MUSK signaling complex induces phosphorylation and activation of MUSK, the kinase of the complex. The activation of MUSK in myotubes regulates the formation of NMJs through the regulation of different processes including the specific expression of genes in subsynaptic nuclei, the reorganization of the actin cytoskeleton and the clustering of the acetylcholine receptors (AChR) in the postsynaptic membrane. May regulate AChR phosphorylation and clustering through activation of ABL1 and Src family kinases which in turn regulate MUSK. DVL1 and PAK1 that form a ternary complex with MUSK are also important for MUSK-dependent regulation of AChR clustering. May positively regulate Rho family GTPases through FNTA. Mediates the phosphorylation of FNTA which promotes prenylation, recruitment to membranes and activation of RAC1 a regulator of the actin cytoskeleton and of gene expression. Other effectors of the MUSK signaling include DNAJA3 which functions downstream of MUSK. May also play a role within the central nervous system by mediating cholinergic responses, synaptic plasticity and memory formation. This is Muscle, skeletal receptor tyrosine protein kinase (Musk) from Rattus norvegicus (Rat).